We begin with the raw amino-acid sequence, 417 residues long: Serine--tRNA ligase (417 aa).

Residue 226-228 (TSE) participates in L-serine binding. ATP contacts are provided by residues 257–259 (RRE) and valine 273. Residue glutamate 280 coordinates L-serine. An ATP-binding site is contributed by 344–347 (ELTS). Threonine 379 serves as a coordination point for L-serine.

The protein belongs to the class-II aminoacyl-tRNA synthetase family. Type-1 seryl-tRNA synthetase subfamily. As to quaternary structure, homodimer. The tRNA molecule binds across the dimer.

The protein resides in the cytoplasm. The enzyme catalyses tRNA(Ser) + L-serine + ATP = L-seryl-tRNA(Ser) + AMP + diphosphate + H(+). The catalysed reaction is tRNA(Sec) + L-serine + ATP = L-seryl-tRNA(Sec) + AMP + diphosphate + H(+). It participates in aminoacyl-tRNA biosynthesis; selenocysteinyl-tRNA(Sec) biosynthesis; L-seryl-tRNA(Sec) from L-serine and tRNA(Sec): step 1/1. Its function is as follows. Catalyzes the attachment of serine to tRNA(Ser). Is also able to aminoacylate tRNA(Sec) with serine, to form the misacylated tRNA L-seryl-tRNA(Sec), which will be further converted into selenocysteinyl-tRNA(Sec). The protein is Serine--tRNA ligase of Mycobacterium sp. (strain JLS).